A 495-amino-acid chain; its full sequence is N-succinylglutamate 5-semialdehyde dehydrogenase (495 aa).

220 to 225 (GSAGTG) contacts NAD(+). Active-site residues include E243 and C277.

The protein belongs to the aldehyde dehydrogenase family. AstD subfamily.

The catalysed reaction is N-succinyl-L-glutamate 5-semialdehyde + NAD(+) + H2O = N-succinyl-L-glutamate + NADH + 2 H(+). It participates in amino-acid degradation; L-arginine degradation via AST pathway; L-glutamate and succinate from L-arginine: step 4/5. Its function is as follows. Catalyzes the NAD-dependent reduction of succinylglutamate semialdehyde into succinylglutamate. This chain is N-succinylglutamate 5-semialdehyde dehydrogenase, found in Enterobacter sp. (strain 638).